A 265-amino-acid polypeptide reads, in one-letter code: Inositol-1-monophosphatase (265 aa).

Glutamate 69, aspartate 87, isoleucine 89, and aspartate 90 together coordinate Mg(2+). Residue glutamate 69 participates in substrate binding. Residues 89–92 (IDGT), arginine 185, and aspartate 214 contribute to the substrate site. Aspartate 214 is a binding site for Mg(2+).

The protein belongs to the inositol monophosphatase superfamily. It depends on Mg(2+) as a cofactor.

The enzyme catalyses a myo-inositol phosphate + H2O = myo-inositol + phosphate. It carries out the reaction a ribonucleoside 5'-phosphate + H2O = a ribonucleoside + phosphate. Hydrolyzes myo-inositol monophosphate. Catalyzes the dephosphorylation of GMP and IMP. The chain is Inositol-1-monophosphatase from Bacillus subtilis (strain 168).